The sequence spans 1409 residues: DNA-directed RNA polymerase subunit beta' (1409 aa).

Zn(2+) contacts are provided by cysteine 69, cysteine 71, cysteine 84, and cysteine 87. Aspartate 461, aspartate 463, and aspartate 465 together coordinate Mg(2+). Zn(2+)-binding residues include cysteine 805, cysteine 879, cysteine 886, and cysteine 889.

This sequence belongs to the RNA polymerase beta' chain family. As to quaternary structure, the RNAP catalytic core consists of 2 alpha, 1 beta, 1 beta' and 1 omega subunit. When a sigma factor is associated with the core the holoenzyme is formed, which can initiate transcription. Mg(2+) serves as cofactor. Zn(2+) is required as a cofactor.

It catalyses the reaction RNA(n) + a ribonucleoside 5'-triphosphate = RNA(n+1) + diphosphate. Functionally, DNA-dependent RNA polymerase catalyzes the transcription of DNA into RNA using the four ribonucleoside triphosphates as substrates. The chain is DNA-directed RNA polymerase subunit beta' from Anaplasma phagocytophilum (strain HZ).